We begin with the raw amino-acid sequence, 315 residues long: Glutathione synthetase (315 aa).

An ATP-grasp domain is found at 125-310 (KLFTAWFSEF…ITGMLFDAIE (186 aa)). ATP is bound at residue 151–207 (HQAKGDIILKPLDGMGGTSIFRVKQDDPNLGVIIETLTQYGNQYAMAQAFIPEITKG). Glu-281 and Asn-283 together coordinate Mg(2+).

It belongs to the prokaryotic GSH synthase family. Mg(2+) is required as a cofactor. It depends on Mn(2+) as a cofactor.

It carries out the reaction gamma-L-glutamyl-L-cysteine + glycine + ATP = glutathione + ADP + phosphate + H(+). It functions in the pathway sulfur metabolism; glutathione biosynthesis; glutathione from L-cysteine and L-glutamate: step 2/2. The sequence is that of Glutathione synthetase from Shewanella oneidensis (strain ATCC 700550 / JCM 31522 / CIP 106686 / LMG 19005 / NCIMB 14063 / MR-1).